The following is a 952-amino-acid chain: DNA topoisomerase 1 (952 aa).

Positions 12–135 (RRLVIVESPA…VKRMVFHEIT (124 aa)) constitute a Toprim domain. Mg(2+) contacts are provided by Glu18 and Asp104. Residues 150–602 (NQKLVDAQET…RFYFGEGDGT (453 aa)) form the Topo IA-type catalytic domain. The interval 184–189 (SAGRVQ) is interaction with DNA. The O-(5'-phospho-DNA)-tyrosine intermediate role is filled by Tyr334. The segment at 847 to 952 (RFGPYVTDGE…KATASKTSED (106 aa)) is disordered. The span at 871–884 (TPERGYELLAEKRA) shows a compositional bias: basic and acidic residues. The segment covering 885–906 (KGPAKKTAKKAVKKTAAKKAPA) has biased composition (basic residues). Composition is skewed to low complexity over residues 907–930 (KKAA…AAKS) and 937–952 (AKTA…TSED).

This sequence belongs to the type IA topoisomerase family. In terms of assembly, monomer. The cofactor is Mg(2+).

It catalyses the reaction ATP-independent breakage of single-stranded DNA, followed by passage and rejoining.. Its function is as follows. Releases the supercoiling and torsional tension of DNA, which is introduced during the DNA replication and transcription, by transiently cleaving and rejoining one strand of the DNA duplex. Introduces a single-strand break via transesterification at a target site in duplex DNA. The scissile phosphodiester is attacked by the catalytic tyrosine of the enzyme, resulting in the formation of a DNA-(5'-phosphotyrosyl)-enzyme intermediate and the expulsion of a 3'-OH DNA strand. The free DNA strand then undergoes passage around the unbroken strand, thus removing DNA supercoils. Finally, in the religation step, the DNA 3'-OH attacks the covalent intermediate to expel the active-site tyrosine and restore the DNA phosphodiester backbone. Functionally, relaxes supercoiled plasmid in vitro; in the presence of sIHF (integration host factor) relaxation is decreased. The chain is DNA topoisomerase 1 from Streptomyces coelicolor (strain ATCC BAA-471 / A3(2) / M145).